A 118-amino-acid polypeptide reads, in one-letter code: Neutral phospholipase A2 homolog taipoxin beta chain 2 (118 aa).

Intrachain disulfides connect cysteine 11-cysteine 71, cysteine 27-cysteine 117, cysteine 29-cysteine 45, cysteine 44-cysteine 98, cysteine 51-cysteine 91, cysteine 60-cysteine 84, and cysteine 78-cysteine 89.

Belongs to the phospholipase A2 family. Group I subfamily. D49 sub-subfamily. In terms of assembly, heterotrimer of alpha, beta, and gamma chains; non-covalently linked. Expressed by the venom gland.

The protein resides in the secreted. Heterotrimer: Snake venom phospholipase A2 (PLA2) heterotrimer that acts as a potent presynaptic neurotoxin by blocking synaptic transmission and synaptic vesicle recycling. May act by binding in a calcium-dependent fashion to neurotonal pentraxin-1 (NPTX1) and neurotonal pentraxin-2 (NPTX2), but not to neuronal pentraxin receptor (NPTXR). Also binds to taipoxin-associated calcium binding protein 49 (RCN2), a protein localized in the lumen of endoplasmic reticulum. In terms of biological role, monomer (beta chain): Snake venom phospholipase A2 homolog that is neither toxic nor enzymatically active. Does not bind calcium. In Oxyuranus scutellatus scutellatus (Australian taipan), this protein is Neutral phospholipase A2 homolog taipoxin beta chain 2.